The following is a 186-amino-acid chain: Probable chorismate pyruvate-lyase (186 aa).

Positions 80, 118, and 170 each coordinate substrate.

This sequence belongs to the UbiC family.

The protein resides in the cytoplasm. It catalyses the reaction chorismate = 4-hydroxybenzoate + pyruvate. It participates in cofactor biosynthesis; ubiquinone biosynthesis. Removes the pyruvyl group from chorismate, with concomitant aromatization of the ring, to provide 4-hydroxybenzoate (4HB) for the ubiquinone pathway. In Pseudomonas syringae pv. syringae (strain B728a), this protein is Probable chorismate pyruvate-lyase.